The sequence spans 254 residues: PHD finger protein ALFIN-LIKE 8 (254 aa).

The segment at 137 to 194 (GTAKKQSKEKTPKTSGKSNKSGTKPSRQPEPNSRGPKMPPPKDEDDSGGEEEEEEEDH) is disordered. Over residues 149-162 (KTSGKSNKSGTKPS) the composition is skewed to low complexity. Residues 179–194 (DEDDSGGEEEEEEEDH) are compositionally biased toward acidic residues. Residues 196–248 (NTLCGACGDNYGQDEFWICCDACETWFHGKCVKITPAKAEHIKHYKCPNCSSS) form a PHD-type zinc finger.

This sequence belongs to the Alfin family. As to quaternary structure, interacts with H3K4me3 and to a lesser extent with H3K4me2.

It localises to the nucleus. Functionally, histone-binding component that specifically recognizes H3 tails trimethylated on 'Lys-4' (H3K4me3), which mark transcription start sites of virtually all active genes. The polypeptide is PHD finger protein ALFIN-LIKE 8 (Oryza sativa subsp. japonica (Rice)).